Here is a 150-residue protein sequence, read N- to C-terminus: SsrA-binding protein (150 aa).

The protein belongs to the SmpB family.

The protein localises to the cytoplasm. Its function is as follows. Required for rescue of stalled ribosomes mediated by trans-translation. Binds to transfer-messenger RNA (tmRNA), required for stable association of tmRNA with ribosomes. tmRNA and SmpB together mimic tRNA shape, replacing the anticodon stem-loop with SmpB. tmRNA is encoded by the ssrA gene; the 2 termini fold to resemble tRNA(Ala) and it encodes a 'tag peptide', a short internal open reading frame. During trans-translation Ala-aminoacylated tmRNA acts like a tRNA, entering the A-site of stalled ribosomes, displacing the stalled mRNA. The ribosome then switches to translate the ORF on the tmRNA; the nascent peptide is terminated with the 'tag peptide' encoded by the tmRNA and targeted for degradation. The ribosome is freed to recommence translation, which seems to be the essential function of trans-translation. In Polynucleobacter asymbioticus (strain DSM 18221 / CIP 109841 / QLW-P1DMWA-1) (Polynucleobacter necessarius subsp. asymbioticus), this protein is SsrA-binding protein.